Here is a 139-residue protein sequence, read N- to C-terminus: MLIPRRVKYRKQHHPKRTGAAKGGTQLAFGDYGIQATEGGYLTNRQIEAARIAMTRYIKRGGKVWINVYPDRPMTKHPAESRMGSGKGTPEWWIANIKPGRVLFELSGVPEDVAREAMRLAIHKLPMKARFISREGGDN.

Over residues 1–19 the composition is skewed to basic residues; sequence MLIPRRVKYRKQHHPKRTG. The tract at residues 1-23 is disordered; it reads MLIPRRVKYRKQHHPKRTGAAKG.

The protein belongs to the universal ribosomal protein uL16 family. As to quaternary structure, part of the 50S ribosomal subunit.

Functionally, binds 23S rRNA and is also seen to make contacts with the A and possibly P site tRNAs. The chain is Large ribosomal subunit protein uL16 from Cutibacterium acnes (strain DSM 16379 / KPA171202) (Propionibacterium acnes).